The sequence spans 377 residues: Chaperone protein DnaJ (377 aa).

The J domain occupies 5–70 (DYYEVLEVSR…EKRTIYDRYG (66 aa)). A CR-type zinc finger spans residues 138-215 (GCEKKIDITY…CQGKGYHEET (78 aa)). Zn(2+) is bound by residues Cys151, Cys154, Cys167, Cys170, Cys189, Cys192, Cys203, and Cys206. CXXCXGXG motif repeat units follow at residues 151 to 158 (CEECGGTG), 167 to 174 (CDYCGGQG), 189 to 196 (CPKCHGEG), and 203 to 210 (CPSCQGKG).

It belongs to the DnaJ family. As to quaternary structure, homodimer. Zn(2+) serves as cofactor.

The protein resides in the cytoplasm. Functionally, participates actively in the response to hyperosmotic and heat shock by preventing the aggregation of stress-denatured proteins and by disaggregating proteins, also in an autonomous, DnaK-independent fashion. Unfolded proteins bind initially to DnaJ; upon interaction with the DnaJ-bound protein, DnaK hydrolyzes its bound ATP, resulting in the formation of a stable complex. GrpE releases ADP from DnaK; ATP binding to DnaK triggers the release of the substrate protein, thus completing the reaction cycle. Several rounds of ATP-dependent interactions between DnaJ, DnaK and GrpE are required for fully efficient folding. Also involved, together with DnaK and GrpE, in the DNA replication of plasmids through activation of initiation proteins. The sequence is that of Chaperone protein DnaJ from Sulfurovum sp. (strain NBC37-1).